The sequence spans 136 residues: uncharacterized protein (136 aa).

2 disordered regions span residues 58-82 (TSDDDEKPGNSKIKSHTDQPPTTQT) and 112-136 (NNPKIKTNNPNEEFENTGADSVVTQ).

This is an uncharacterized protein from Dictyostelium discoideum (Social amoeba).